The primary structure comprises 389 residues: E3 ubiquitin-protein ligase E3D (389 aa).

N-acetylalanine is present on Ala-2. Residues 129-159 carry the BRAT1-like motif motif; it reads PLPGDNWGALVDEWCCHPDPFANKPLHPREN. Cys-144 serves as a coordination point for Zn(2+). Positions 235 to 257 are interaction with UBE2C; that stretch reads LPSERNFPIIPRSQFVQSVLAQC. Residues 353-389 form an HECT-like region; that stretch reads LPSTTCLELLLILSKSNATLPPSLRCMNSFQVAFLKM.

In terms of assembly, interacts with UBE2C/UbcH10 (E2 ubiquitin-conjugating enzyme). In vitro, interacts with cyclin-B. Post-translationally, ubiquitinated by UBCH10 (E2 ubiquitin-conjugating enzyme).

The protein resides in the cytoplasm. The enzyme catalyses S-ubiquitinyl-[E2 ubiquitin-conjugating enzyme]-L-cysteine + [acceptor protein]-L-lysine = [E2 ubiquitin-conjugating enzyme]-L-cysteine + N(6)-ubiquitinyl-[acceptor protein]-L-lysine.. It participates in protein modification; protein ubiquitination. Its function is as follows. E3 ubiquitin-protein ligase which accepts ubiquitin from specific E2 ubiquitin-conjugating enzymes, and transfers it to substrates, generally promoting their degradation by the proteasome. Independently of its E3 ubiquitin-protein ligase activity, acts as an inhibitor of CPSF3 endonuclease activity by blocking CPSF3 active site. The sequence is that of E3 ubiquitin-protein ligase E3D (UBE3D) from Bos taurus (Bovine).